The chain runs to 212 residues: Ion-translocating oxidoreductase complex subunit G (212 aa).

A helical membrane pass occupies residues glycine 9–glutamine 29. Threonine 176 is subject to FMN phosphoryl threonine.

This sequence belongs to the RnfG family. The complex is composed of six subunits: RnfA, RnfB, RnfC, RnfD, RnfE and RnfG. Requires FMN as cofactor.

It localises to the cell inner membrane. Part of a membrane-bound complex that couples electron transfer with translocation of ions across the membrane. In Shewanella oneidensis (strain ATCC 700550 / JCM 31522 / CIP 106686 / LMG 19005 / NCIMB 14063 / MR-1), this protein is Ion-translocating oxidoreductase complex subunit G.